The primary structure comprises 258 residues: Ribonuclease PH (258 aa).

Phosphate is bound by residues Arg86 and Gly124–Arg126.

Belongs to the RNase PH family. In terms of assembly, homohexameric ring arranged as a trimer of dimers.

The enzyme catalyses tRNA(n+1) + phosphate = tRNA(n) + a ribonucleoside 5'-diphosphate. In terms of biological role, phosphorolytic 3'-5' exoribonuclease that plays an important role in tRNA 3'-end maturation. Removes nucleotide residues following the 3'-CCA terminus of tRNAs; can also add nucleotides to the ends of RNA molecules by using nucleoside diphosphates as substrates, but this may not be physiologically important. Probably plays a role in initiation of 16S rRNA degradation (leading to ribosome degradation) during starvation. This chain is Ribonuclease PH, found in Caldicellulosiruptor saccharolyticus (strain ATCC 43494 / DSM 8903 / Tp8T 6331).